The sequence spans 215 residues: Cytochrome b6 (215 aa).

Residues 32–52 (IFYCLGGITLTCFLVQVATGF) traverse the membrane as a helical segment. Residue Cys35 coordinates heme c. Heme b-binding residues include His86 and His100. 3 helical membrane-spanning segments follow: residues 90 to 110 (ASMM…TGGF), 116 to 136 (LTWV…VTGY), and 186 to 206 (LHTF…FPMI). Residues His187 and His202 each coordinate heme b.

The protein belongs to the cytochrome b family. PetB subfamily. In terms of assembly, the 4 large subunits of the cytochrome b6-f complex are cytochrome b6, subunit IV (17 kDa polypeptide, PetD), cytochrome f and the Rieske protein, while the 4 small subunits are PetG, PetL, PetM and PetN. The complex functions as a dimer. The cofactor is heme b. It depends on heme c as a cofactor.

Its subcellular location is the plastid. The protein resides in the chloroplast thylakoid membrane. Component of the cytochrome b6-f complex, which mediates electron transfer between photosystem II (PSII) and photosystem I (PSI), cyclic electron flow around PSI, and state transitions. In Populus alba (White poplar), this protein is Cytochrome b6.